The chain runs to 160 residues: H/ACA ribonucleoprotein complex subunit 2-like protein (160 aa).

The protein belongs to the eukaryotic ribosomal protein eL8 family. In terms of assembly, component of the small nucleolar ribonucleoprotein particle containing H/ACA-type snoRNAs (H/ACA snoRNPs).

Its subcellular location is the nucleus. The protein resides in the nucleolus. Required for ribosome biogenesis. Part of a complex which catalyzes pseudouridylation of rRNA. This involves the isomerization of uridine such that the ribose is subsequently attached to C5, instead of the normal N1. Pseudouridine ('psi') residues may serve to stabilize the conformation of rRNAs. The protein is H/ACA ribonucleoprotein complex subunit 2-like protein (NHP2) of Drosophila yakuba (Fruit fly).